A 596-amino-acid chain; its full sequence is Inactive metallocarboxypeptidase ECM14 (596 aa).

The first 22 residues, 1 to 22, serve as a signal peptide directing secretion; that stretch reads MHFSVRLSLFLTLASSLPLVSA. A propeptide spanning residues 23 to 184 is cleaved from the precursor; that stretch reads VPQHEDQAYT…QTIYESYPKA (162 aa). Residues 182–211 are disordered; it reads PKAGSASPSQQGPTTRRFSPSASTSKSKPH. Residues 187-207 show a composition bias toward polar residues; sequence ASPSQQGPTTRRFSPSASTSK. The 327-residue stretch at 220–546 folds into the Peptidase M14 domain; the sequence is DYQPLSVLLP…RAMVAMGKFL (327 aa). Zn(2+) contacts are provided by His-285 and Glu-288. Residues 285–288, Arg-343, and 360–361 each bind substrate; these read HARE and DH. Cys-354 and Cys-377 form a disulfide bridge. The N-linked (GlcNAc...) asparagine glycan is linked to Asn-370. His-417 contributes to the Zn(2+) binding site. Substrate is bound at residue 418–419; that stretch reads SY. A disordered region spans residues 557-596; that stretch reads DGLRASEEPQDYDNDLEDGEDDKDEQGSTVFRAQADDLQS. Positions 564–580 are enriched in acidic residues; that stretch reads EPQDYDNDLEDGEDDKD. A compositionally biased stretch (polar residues) spans 583–596; sequence GSTVFRAQADDLQS.

It belongs to the peptidase M14 family. The cofactor is Zn(2+).

It is found in the vacuole. The protein resides in the secreted. Inactive carboxypeptidase that may play a role in cell wall organization and biogenesis. In Arthroderma benhamiae (strain ATCC MYA-4681 / CBS 112371) (Trichophyton mentagrophytes), this protein is Inactive metallocarboxypeptidase ECM14 (ECM14).